We begin with the raw amino-acid sequence, 294 residues long: Probable endonuclease 4 (294 aa).

Positions 78, 118, 155, 189, 192, 226, 239, 241, and 271 each coordinate Zn(2+).

This sequence belongs to the AP endonuclease 2 family. The cofactor is Zn(2+).

The enzyme catalyses Endonucleolytic cleavage to 5'-phosphooligonucleotide end-products.. Its function is as follows. Endonuclease IV plays a role in DNA repair. It cleaves phosphodiester bonds at apurinic or apyrimidinic (AP) sites, generating a 3'-hydroxyl group and a 5'-terminal sugar phosphate. This is Probable endonuclease 4 from Oleidesulfovibrio alaskensis (strain ATCC BAA-1058 / DSM 17464 / G20) (Desulfovibrio alaskensis).